Reading from the N-terminus, the 52-residue chain is uncharacterized protein (52 aa).

The segment at Met1–Met52 is disordered. Residues Lys16–Lys25 are compositionally biased toward basic and acidic residues. Residues Pro27–Met52 are compositionally biased toward gly residues.

This is an uncharacterized protein from Dictyostelium discoideum (Social amoeba).